A 242-amino-acid polypeptide reads, in one-letter code: Putative serine/threonine-protein kinase (242 aa).

One can recognise a Protein kinase domain in the interval 49-242; it reads FSSKNKVGEG…KSDVYSFGVL (194 aa). Residues 55–63 and Lys77 contribute to the ATP site; that span reads VGEGGCGAV. Residue Asp177 is the Proton acceptor of the active site.

Belongs to the protein kinase superfamily. Ser/Thr protein kinase family.

The catalysed reaction is L-seryl-[protein] + ATP = O-phospho-L-seryl-[protein] + ADP + H(+). It catalyses the reaction L-threonyl-[protein] + ATP = O-phospho-L-threonyl-[protein] + ADP + H(+). The protein is Putative serine/threonine-protein kinase of Helianthus annuus (Common sunflower).